Reading from the N-terminus, the 85-residue chain is Serine protease inhibitor Cvsi-2 (85 aa).

Residues 1–18 (MKVAVVVALLCFVCYTAA) form the signal peptide.

Post-translationally, contains 6 disulfide bonds. Detected in hemolymph (at protein level). Within the digestive gland expression is limited to the basophil cells of the digestive diverticula.

Its subcellular location is the secreted. Its function is as follows. Slow-binding inhibitor of serine proteases. The inhibitor rapidly binds to the protease forming a weak enzyme-inhibitor complex, and this is followed by a slow isomerization forming a tight-binding enzyme-inhibitor complex. Active against subtilisin A with a dissociation constant of 0.18 nM. Active against perkinsin. Not active against thermolysin, papain or pepsin. The sequence is that of Serine protease inhibitor Cvsi-2 from Crassostrea virginica (Eastern oyster).